The sequence spans 393 residues: Glycocyamine kinase (393 aa).

Residues 7–94 (REKFAKENFP…FDRVIEEIHH (88 aa)) form the Phosphagen kinase N-terminal domain. Positions 120 to 362 (YVKSCRIRCG…NVLIEADKRL (243 aa)) constitute a Phosphagen kinase C-terminal domain. Residues 123–127 (SCRIR), His186, Arg231, 287–291 (RASVH), 315–320 (RGTGGE), and Asp330 each bind ATP. The segment at 367-393 (PIDDLTPRLNSSTGTSISATASRHMTL) is disordered. A compositionally biased stretch (low complexity) spans 377–393 (SSTGTSISATASRHMTL).

Belongs to the ATP:guanido phosphotransferase family. In terms of assembly, monomer.

The enzyme catalyses guanidinoacetate + ATP = phosphoguanidinoacetate + ADP + H(+). The polypeptide is Glycocyamine kinase (Hediste diversicolor (Sandworm)).